The primary structure comprises 347 residues: Autoinducer 2 import system permease protein LsrC (347 aa).

Helical transmembrane passes span 14-34 (LLAI…YLSV), 39-59 (MVFS…MVML), 72-92 (GMCA…PVAC), 93-113 (LATL…VAWL), 115-135 (IPAI…MLLW), 155-175 (VFLG…LMAW), 213-233 (LNGG…GFIP), 249-269 (VLGG…ILGA), and 284-304 (IPAW…LVFD).

This sequence belongs to the binding-protein-dependent transport system permease family. AraH/RbsC subfamily. The complex is composed of two ATP-binding proteins (LsrA), two transmembrane proteins (LsrC and LsrD) and a solute-binding protein (LsrB).

It localises to the cell inner membrane. Part of the ABC transporter complex LsrABCD involved in autoinducer 2 (AI-2) import. Probably responsible for the translocation of the substrate across the membrane. The protein is Autoinducer 2 import system permease protein LsrC (lsrC) of Salmonella paratyphi A (strain ATCC 9150 / SARB42).